We begin with the raw amino-acid sequence, 160 residues long: Cytochrome b6-f complex subunit 4 (160 aa).

The next 3 helical transmembrane spans lie at 36 to 56 (LLYI…GLAV), 95 to 115 (LLGI…PFIE), and 128 to 148 (IAMS…IGAC).

Belongs to the cytochrome b family. PetD subfamily. As to quaternary structure, the 4 large subunits of the cytochrome b6-f complex are cytochrome b6, subunit IV (17 kDa polypeptide, PetD), cytochrome f and the Rieske protein, while the 4 small subunits are PetG, PetL, PetM and PetN. The complex functions as a dimer.

The protein resides in the cellular thylakoid membrane. In terms of biological role, component of the cytochrome b6-f complex, which mediates electron transfer between photosystem II (PSII) and photosystem I (PSI), cyclic electron flow around PSI, and state transitions. The chain is Cytochrome b6-f complex subunit 4 from Prochlorococcus marinus (strain MIT 9312).